Reading from the N-terminus, the 210-residue chain is Cdc42 effector protein 2 (210 aa).

Ser2 is modified (N-acetylserine). In terms of domain architecture, CRIB spans 30–44 (ISPPLGDFRHTIHIG). 3 positions are modified to phosphoserine: Ser31, Ser101, and Ser141. Positions 124-145 (AQAPPKPPRLHLETPQASPQEA) are disordered.

Belongs to the BORG/CEP family. As to quaternary structure, interacts with CDC42 and RHOQ, in a GTP-dependent manner, and with SEPT7.

The protein resides in the endomembrane system. It localises to the cytoplasm. Its subcellular location is the cytoskeleton. Functionally, probably involved in the organization of the actin cytoskeleton. May act downstream of CDC42 to induce actin filament assembly leading to cell shape changes. Induces pseudopodia formation in fibroblasts in a CDC42-dependent manner. This is Cdc42 effector protein 2 (CDC42EP2) from Bos taurus (Bovine).